Consider the following 209-residue polypeptide: Probable GTP-binding protein EngB (209 aa).

The 177-residue stretch at 22–198 folds into the EngB-type G domain; sequence TPLEIAFVGR…NRTVGSWFDA (177 aa). Mg(2+) is bound by residues S37 and T59.

It belongs to the TRAFAC class TrmE-Era-EngA-EngB-Septin-like GTPase superfamily. EngB GTPase family. Requires Mg(2+) as cofactor.

Functionally, necessary for normal cell division and for the maintenance of normal septation. This is Probable GTP-binding protein EngB from Neisseria meningitidis serogroup C (strain 053442).